Here is a 355-residue protein sequence, read N- to C-terminus: Transcription factor TCP13 (355 aa).

Residues 1 to 57 are disordered; the sequence is MNIVSWKDANDEVAGGATTRREREVKEDQEETEVRATSGKTVIKKQPTSISSSSSSW. One can recognise a TCP domain in the interval 74-132; it reads GKDRHSKVCTLRGLRDRRVRLSVPTAIQLYDLQERLGVDQPSKAVDWLLDAAKEEIDEL. Residues 329–355 form a disordered region; sequence TNSTTTANMSRHLGSERCTSRGSDHHM. A compositionally biased stretch (basic and acidic residues) spans 341-355; that stretch reads LGSERCTSRGSDHHM.

As to quaternary structure, interacts with AHL27 and AHL29. Interacts with SPL. Interacts with KIN10; KIN11 and FLZ3. In terms of tissue distribution, expressed in cotyledons, particularly in the vascular region, in leaves, buds, flowers and immature siliques, and, to a lower extent, in roots.

The protein localises to the nucleus. It localises to the plastid. The protein resides in the chloroplast. Plays a pivotal role in the control of morphogenesis of shoot organs by negatively regulating the expression of boundary-specific genes such as CUC genes, probably through the induction of miRNA (e.g. miR164). Binds to the 3'-ACC-5' repeats in the light-responsive promoter (LRP) of psbD, and activates its transcription. Participates in ovule development. This chain is Transcription factor TCP13 (TCP13), found in Arabidopsis thaliana (Mouse-ear cress).